The chain runs to 446 residues: MTNMTQASATEKKGAGDLLRFKIFGMPLPLYAFALITLLLSHFYNAIPTDLVGGFALMFVMGAIFGEIGKRLPIFNKYIGGAPVMIFLVAAYFVYAGIFTQKEIDAISNVMDKSNFLNLFIAVLITGAILSVNRKLLLKSLLGYIPTILAGIVGASLFGIVIGLCFGIPVDRIMMLYVLPIMGGGNGAGAVPLSEIYHSVTGRSREEYYSTAIAILTIANIFAIIFAALLDMIGKKYTWLSGEGELVRKASFKTEDDEKAGQITHRETAVGMVLSTTCFLLAYVVAKKILPSIGGVSIHYFAWMVLIVAALNASGLCSPEIKAGAKRLSDFFSKQLLWVLMVGVGVCYTDLQEIIDALTFANVVIAAIIVVGAVVGAAIGGWLIGFYPIESSITAGLCMANRGGSGDLEVLSACNRMNLISYAQISSRLGGGIVLVIASIVFSMMV.

5 consecutive transmembrane segments (helical) span residues 23 to 43 (IFGM…LSHF), 46 to 66 (AIPT…AIFG), 79 to 99 (IGGA…AGIF), 110 to 130 (VMDK…GAIL), and 148 to 168 (ILAG…CFGI). 2 residues coordinate Na(+): Ile181 and Gly183. Positions 186 and 187 each coordinate citrate. 5 consecutive transmembrane segments (helical) span residues 213–233 (IAIL…LDMI), 267–287 (ETAV…VVAK), 289–309 (ILPS…LIVA), 335–355 (QLLW…QEII), and 364–384 (VIAA…GWLI). The Na(+) site is built by Met399 and Asn401. Residues Arg402, Gly404, Ser405, and Arg428 each contribute to the citrate site. Residues 425–445 (ISSRLGGGIVLVIASIVFSMM) form a helical membrane-spanning segment.

It belongs to the 2-hydroxycarboxylate transporter (2-HCT) (TC 2.A.24) family. Homodimer.

It localises to the cell inner membrane. The catalysed reaction is citrate(out) + 2 Na(+)(out) = citrate(in) + 2 Na(+)(in). Functionally, secondary active transporter that catalyzes the uptake of citrate across the membrane with the concomitant uptake of sodium. Is specific for citrate. The protein is Citrate/sodium symporter of Salmonella dublin.